A 154-amino-acid polypeptide reads, in one-letter code: uncharacterized protein (154 aa).

3 residues coordinate a divalent metal cation: H47, H127, and H131. At Y150 the chain carries Phosphotyrosine.

The protein belongs to the DinB family. Homodimer.

This is an uncharacterized protein from Bacillus subtilis (strain 168).